We begin with the raw amino-acid sequence, 477 residues long: UDP-N-acetylmuramate--L-alanine ligase (477 aa).

An ATP-binding site is contributed by 120-126 (GSHGKTT).

Belongs to the MurCDEF family.

The protein resides in the cytoplasm. It catalyses the reaction UDP-N-acetyl-alpha-D-muramate + L-alanine + ATP = UDP-N-acetyl-alpha-D-muramoyl-L-alanine + ADP + phosphate + H(+). The protein operates within cell wall biogenesis; peptidoglycan biosynthesis. Its function is as follows. Cell wall formation. The polypeptide is UDP-N-acetylmuramate--L-alanine ligase (Rickettsia canadensis (strain McKiel)).